A 218-amino-acid polypeptide reads, in one-letter code: 3,4-dihydroxy-2-butanone 4-phosphate synthase (218 aa).

Residues 37-38 (RE), Asp42, 150-154 (RSGHT), and Glu174 contribute to the D-ribulose 5-phosphate site. Residue Glu38 coordinates Mg(2+). His153 contributes to the Mg(2+) binding site.

This sequence belongs to the DHBP synthase family. Homodimer. It depends on Mg(2+) as a cofactor. Mn(2+) is required as a cofactor.

The enzyme catalyses D-ribulose 5-phosphate = (2S)-2-hydroxy-3-oxobutyl phosphate + formate + H(+). The protein operates within cofactor biosynthesis; riboflavin biosynthesis; 2-hydroxy-3-oxobutyl phosphate from D-ribulose 5-phosphate: step 1/1. In terms of biological role, catalyzes the conversion of D-ribulose 5-phosphate to formate and 3,4-dihydroxy-2-butanone 4-phosphate. In Hamiltonella defensa subsp. Acyrthosiphon pisum (strain 5AT), this protein is 3,4-dihydroxy-2-butanone 4-phosphate synthase.